The chain runs to 1324 residues: Mediator of RNA polymerase II transcription subunit 13 (1324 aa).

Disordered regions lie at residues 296–346, 386–455, 535–590, 607–631, 694–816, and 1151–1198; these read ESGV…PPEA, FFDD…ATTA, GRFF…EPEI, HDDK…SNNS, KGGQ…VPSA, and TGSD…PDIY. Residues 298–331 are compositionally biased toward polar residues; the sequence is GVNTNESTAAQPQPAQNGTNSMAPAAGTTNATTQ. Residues 398–407 are compositionally biased toward acidic residues; the sequence is DGDNDNGNDN. The span at 408-442 shows a compositional bias: basic and acidic residues; sequence DNDKADAMDVDVKEEAKKEEMIKKETKEEVPVKEE. Positions 546-566 are enriched in low complexity; sequence DNEGSSDNTGDSSDSGDGSES. Basic and acidic residues-rich tracts occupy residues 567 to 578 and 607 to 617; these read VPRDVKRQKVDE and HDDKPAKKIDS. Low complexity-rich tracts occupy residues 618–631 and 724–743; these read SNDT…SNNS and SNAS…QMGA. Over residues 750 to 784 the composition is skewed to polar residues; that stretch reads LSPSRGATPQPEGSSPETRPSNWTPGITSQVNSAA. Composition is skewed to low complexity over residues 785 to 816 and 1172 to 1184; these read SSPV…VPSA and TGAA…GSAP.

The protein belongs to the Mediator complex subunit 13 family. Component of the SRB8-11 complex, which itself associates with the Mediator complex.

The protein localises to the nucleus. Component of the SRB8-11 complex. The SRB8-11 complex is a regulatory module of the Mediator complex which is itself involved in regulation of basal and activated RNA polymerase II-dependent transcription. The SRB8-11 complex may be involved in the transcriptional repression of a subset of genes regulated by Mediator. It may inhibit the association of the Mediator complex with RNA polymerase II to form the holoenzyme complex. This Yarrowia lipolytica (strain CLIB 122 / E 150) (Yeast) protein is Mediator of RNA polymerase II transcription subunit 13 (SSN2).